The following is a 283-amino-acid chain: Glutamate racemase (283 aa).

Substrate is bound by residues 7–8 (DS) and 39–40 (YG). The active-site Proton donor/acceptor is Cys-70. 71–72 (NT) provides a ligand contact to substrate. Cys-206 functions as the Proton donor/acceptor in the catalytic mechanism. 207-208 (TH) provides a ligand contact to substrate.

This sequence belongs to the aspartate/glutamate racemases family.

The enzyme catalyses L-glutamate = D-glutamate. It functions in the pathway cell wall biogenesis; peptidoglycan biosynthesis. Provides the (R)-glutamate required for cell wall biosynthesis. The chain is Glutamate racemase from Phenylobacterium zucineum (strain HLK1).